Here is a 547-residue protein sequence, read N- to C-terminus: Vacuolar fusion protein MON1 homolog B (547 aa).

Met1 is modified (N-acetylmethionine). The tract at residues 1 to 106 (MEAGGDTAAP…GGDPSDEEWR (106 aa)) is disordered. Pro residues predominate over residues 57 to 66 (PPSPSPPPQS). 2 positions are modified to phosphoserine: Ser59 and Ser61.

This sequence belongs to the MON1/SAND family. Interacts with CCNT2; down-regulates CCNT2-mediated activation of viral promoters during herpes simplex virus 1/HHV-1 infection. Found in a complex with RMC1, CCZ1 MON1A and MON1B.

This chain is Vacuolar fusion protein MON1 homolog B (MON1B), found in Macaca fascicularis (Crab-eating macaque).